Reading from the N-terminus, the 189-residue chain is H/ACA ribonucleoprotein complex subunit 1-like protein 2 (189 aa).

The segment covering 1-12 (MRPPRGGGSFRG) has biased composition (gly residues). Disordered stretches follow at residues 1–39 (MRPP…NYDE) and 129–189 (RFLP…RGRA). The segment covering 162–177 (GRGAPRGASRGFQPRG) has biased composition (low complexity).

Belongs to the GAR1 family. Component of the small nucleolar ribonucleoprotein particle containing H/ACA-type snoRNAs (H/ACA snoRNPs).

Its subcellular location is the nucleus. The protein resides in the nucleolus. In terms of biological role, required for ribosome biogenesis. Part of a complex which catalyzes pseudouridylation of rRNA. This involves the isomerization of uridine such that the ribose is subsequently attached to C5, instead of the normal N1. Pseudouridine ('psi') residues may serve to stabilize the conformation of rRNAs. The chain is H/ACA ribonucleoprotein complex subunit 1-like protein 2 from Arabidopsis thaliana (Mouse-ear cress).